Here is a 344-residue protein sequence, read N- to C-terminus: Mitochondrial genome maintenance exonuclease 1 (344 aa).

Residues D238, D251, and K253 contribute to the active site. S343 bears the Phosphoserine mark.

It belongs to the MGME1 family.

It localises to the mitochondrion. Functionally, metal-dependent single-stranded DNA (ssDNA) exonuclease involved in mitochondrial genome maintenance. Has preference for 5'-3' exonuclease activity but is also capable of endonuclease activity on linear substrates. Necessary for maintenance of proper 7S DNA levels. Probably involved in mitochondrial DNA (mtDNA) repair, possibly via the processing of displaced DNA containing Okazaki fragments during RNA-primed DNA synthesis on the lagging strand or via processing of DNA flaps during long-patch base excision repair. Specifically binds 5-hydroxymethylcytosine (5hmC)-containing DNA in stem cells. In Homo sapiens (Human), this protein is Mitochondrial genome maintenance exonuclease 1.